A 372-amino-acid chain; its full sequence is GTPase Obg (372 aa).

Positions Met-1–Leu-159 constitute an Obg domain. The disordered stretch occupies residues Leu-128–Gly-147. In terms of domain architecture, OBG-type G spans Ala-160–Ala-334. Residues Gly-166–Ser-173, Phe-191–Ala-195, Asp-213–Gly-216, Asn-284–Asp-287, and Ser-315–Leu-317 contribute to the GTP site. Positions 173 and 193 each coordinate Mg(2+).

The protein belongs to the TRAFAC class OBG-HflX-like GTPase superfamily. OBG GTPase family. As to quaternary structure, monomer. It depends on Mg(2+) as a cofactor.

It is found in the cytoplasm. Functionally, an essential GTPase which binds GTP, GDP and possibly (p)ppGpp with moderate affinity, with high nucleotide exchange rates and a fairly low GTP hydrolysis rate. Plays a role in control of the cell cycle, stress response, ribosome biogenesis and in those bacteria that undergo differentiation, in morphogenesis control. The chain is GTPase Obg from Burkholderia thailandensis (strain ATCC 700388 / DSM 13276 / CCUG 48851 / CIP 106301 / E264).